The chain runs to 385 residues: Isocitrate dehydrogenase [NAD] subunit beta, mitochondrial (385 aa).

The transit peptide at 1 to 34 (MAALSGVRWLTRALVSAGNPGAWRGLSTSAAAHA) directs the protein to the mitochondrion. Residue K199 is modified to N6-acetyllysine.

The protein belongs to the isocitrate and isopropylmalate dehydrogenases family. In terms of assembly, heterooligomer of subunits alpha (IDH3A), beta (IDH3B), and gamma (IDH3G) in the apparent ratio of 2:1:1. The heterodimer containing one IDH3A and one IDH3B subunit and the heterodimer containing one IDH3A and one IDH3G subunit assemble into a heterotetramer (which contains two subunits of IDH3A, one of IDH3B and one of IDH3G) and further into the heterooctamer.

It is found in the mitochondrion. With respect to regulation, the heterotetramer and the heterodimer composed of IDH3A and IDH3G subunits can be allosterically activated by citrate (CIT) or/and ADP, and the two activators can act independently or synergistically. The heterodimer composed of IDH3A and IDH3B subunits cannot be allosterically regulated and the allosteric regulation of the heterotetramer is through the IDH3G subunit and not the IDH3B subunit. The IDH3G subunit contains the allosteric site which consists of a CIT-binding site and an ADP-binding site, and the binding of CIT and ADP causes conformational changes at the allosteric site which are transmitted to the active site in the catalytic subunit (IDH3A) through a cascade of conformational changes at the heterodimer interface, leading to stabilization of the isocitrate-binding at the active site and thus activation of the enzyme. ATP can activate the heterotetramer and the heterodimer composed of IDH3A and IDH3G subunits at low concentrations but inhibits their activities at high concentrations, whereas ATP exhibits only inhibitory effect on the heterodimer composed of IDH3A and IDH3B subunits. In terms of biological role, plays a structural role to facilitate the assembly and ensure the full activity of the enzyme catalyzing the decarboxylation of isocitrate (ICT) into alpha-ketoglutarate. The heterodimer composed of the alpha (IDH3A) and beta (IDH3B) subunits and the heterodimer composed of the alpha (IDH3A) and gamma (IDH3G) subunits, have considerable basal activity but the full activity of the heterotetramer (containing two subunits of IDH3A, one of IDH3B and one of IDH3G) requires the assembly and cooperative function of both heterodimers. This Homo sapiens (Human) protein is Isocitrate dehydrogenase [NAD] subunit beta, mitochondrial (IDH3B).